Here is a 329-residue protein sequence, read N- to C-terminus: Cytosolic arginine sensor for mTORC1 subunit 1 (329 aa).

Ser-14 is subject to Phosphoserine; by PKB/AKT1. ACT domains lie at Ala-72–Ala-138 and Gly-260–Gln-321. L-arginine is bound by residues Ser-111–Val-112, Gly-274, Ile-280–Val-281, and Thr-300–Asp-304.

This sequence belongs to the GATS family. As to quaternary structure, forms homodimers and heterodimers with CASTOR2. Interacts with the GATOR2 complex which is composed of MIOS, SEC13, SEH1L, WDR24 and WDR59; the interaction is negatively regulated by arginine. Interacts with TM4SF5; the interaction is positively regulated by leucine and is negatively regulated by arginine. Phosphorylation at Ser-14 by AKT1, promoting the interaction between CASTOR1 and RNF167. In terms of processing, ubiquitinated by RNF167 via 'Lys-29'-polyubiquitination, leading to its degradation, releasing the GATOR2 complex. Ubiquitination by RNF167 is promoted by phosphorylation at Ser-14 by AKT1. As to expression, widely expressed.

The protein localises to the cytoplasm. Its subcellular location is the cytosol. Functions as an intracellular arginine sensor within the amino acid-sensing branch of the TORC1 signaling pathway. As a homodimer or a heterodimer with CASTOR2, binds and inhibits the GATOR subcomplex GATOR2 and thereby mTORC1. Binding of arginine to CASTOR1 allosterically disrupts the interaction of CASTOR1-containing dimers with GATOR2 which can in turn activate mTORC1 and the TORC1 signaling pathway. This chain is Cytosolic arginine sensor for mTORC1 subunit 1, found in Homo sapiens (Human).